We begin with the raw amino-acid sequence, 66 residues long: Beta-defensin 13 (66 aa).

A signal peptide spans 1–22 (MRIFSLIVAGLVLLIQLHPAKG). Disulfide bonds link Cys30/Cys59, Cys37/Cys51, and Cys41/Cys60.

This sequence belongs to the beta-defensin family.

Its subcellular location is the secreted. Its function is as follows. Has antibacterial activity. In Rattus norvegicus (Rat), this protein is Beta-defensin 13 (Defb13).